The chain runs to 178 residues: Ribosome maturation factor RimM (178 aa).

Residues E99 to F178 enclose the PRC barrel domain.

Belongs to the RimM family. Binds ribosomal protein uS19.

Its subcellular location is the cytoplasm. In terms of biological role, an accessory protein needed during the final step in the assembly of 30S ribosomal subunit, possibly for assembly of the head region. Essential for efficient processing of 16S rRNA. May be needed both before and after RbfA during the maturation of 16S rRNA. It has affinity for free ribosomal 30S subunits but not for 70S ribosomes. The protein is Ribosome maturation factor RimM of Haemophilus influenzae (strain ATCC 51907 / DSM 11121 / KW20 / Rd).